The chain runs to 449 residues: Probable phosphoglucosamine mutase (449 aa).

S101 functions as the Phosphoserine intermediate in the catalytic mechanism. 4 residues coordinate Mg(2+): S101, D239, D241, and D243. S101 carries the post-translational modification Phosphoserine.

The protein belongs to the phosphohexose mutase family. Mg(2+) serves as cofactor. Post-translationally, activated by phosphorylation.

It catalyses the reaction alpha-D-glucosamine 1-phosphate = D-glucosamine 6-phosphate. Catalyzes the conversion of glucosamine-6-phosphate to glucosamine-1-phosphate. In Methanothermobacter thermautotrophicus (strain ATCC 29096 / DSM 1053 / JCM 10044 / NBRC 100330 / Delta H) (Methanobacterium thermoautotrophicum), this protein is Probable phosphoglucosamine mutase.